Reading from the N-terminus, the 463-residue chain is A-type ATP synthase subunit B (463 aa).

This sequence belongs to the ATPase alpha/beta chains family. Has multiple subunits with at least A(3), B(3), C, D, E, F, H, I and proteolipid K(x).

It is found in the cell membrane. In terms of biological role, component of the A-type ATP synthase that produces ATP from ADP in the presence of a proton gradient across the membrane. The B chain is a regulatory subunit. The sequence is that of A-type ATP synthase subunit B from Saccharolobus islandicus (strain Y.N.15.51 / Yellowstone #2) (Sulfolobus islandicus).